Here is a 146-residue protein sequence, read N- to C-terminus: Hemoglobin subunit beta-1 (146 aa).

The 145-residue stretch at 2–146 folds into the Globin domain; it reads HWTAEEKQLI…VSHSLARRYH (145 aa). Residues H63 and H92 each contribute to the heme b site.

Belongs to the globin family. In terms of assembly, the major hemoglobin component (HbIII) is a tetramer of two alpha-2 chains and two beta-1 chains. As to expression, red blood cells.

In terms of biological role, involved in oxygen transport from the lung to the various peripheral tissues. The polypeptide is Hemoglobin subunit beta-1 (HBB1) (Varanus albigularis (White-throated monitor)).